The chain runs to 88 residues: Long neurotoxin 31 (88 aa).

The N-terminal stretch at 1 to 21 (MKTLLLTLVVVTIVCLDLGNS) is a signal peptide. Intrachain disulfides connect cysteine 24–cysteine 42, cysteine 35–cysteine 63, cysteine 48–cysteine 52, cysteine 67–cysteine 78, and cysteine 79–cysteine 84.

The protein belongs to the three-finger toxin family. Long-chain subfamily. Type II alpha-neurotoxin sub-subfamily. Expressed by the venom gland.

It localises to the secreted. Its function is as follows. Binds with high affinity to muscular (alpha-1/CHRNA1) and neuronal (alpha-7/CHRNA7) nicotinic acetylcholine receptor (nAChR) and inhibits acetylcholine from binding to the receptor, thereby impairing neuromuscular and neuronal transmission. The polypeptide is Long neurotoxin 31 (Drysdalia coronoides (White-lipped snake)).